The sequence spans 44 residues: Non-structural protein 7b (44 aa).

The chain crosses the membrane as a helical span at residues 9–29 (FYLCFLAFLLFLVLIMLIIFW).

It is found in the host membrane. This Bat coronavirus Rp3/2004 (BtCoV/Rp3/2004) protein is Non-structural protein 7b.